Consider the following 174-residue polypeptide: Pituitary tumor-transforming gene 1 protein-interacting protein (174 aa).

Residues 1-29 form the signal peptide; the sequence is MAPANLGLTPHWVMLLGAVLLLLLSGASA. Topologically, residues 30–93 are extracellular; that stretch reads QEPPRVGCSE…RWGVCWVNFE (64 aa). Residues 36-89 enclose the PSI domain; the sequence is GCSEYTNRSCEECLRNVSCLWCNENKACMDYPVRKILPPASLCKLSSARWGVCW. N-linked (GlcNAc...) asparagine glycosylation is found at Asn42 and Asn51. The helical transmembrane segment at 94 to 114 threads the bilayer; sequence ALIITMSVLGGSVLLGITVCC. Topologically, residues 115 to 174 are cytoplasmic; sequence CYCCRRKKSRKPDKSDERAMREQEERRVRQEERRAEMKSRHDEIRKKYGLFKEQNPYEKF. Residues 125–155 are disordered; the sequence is KPDKSDERAMREQEERRVRQEERRAEMKSRH. The span at 126 to 155 shows a compositional bias: basic and acidic residues; it reads PDKSDERAMREQEERRVRQEERRAEMKSRH. A coiled-coil region spans residues 127-163; the sequence is DKSDERAMREQEERRVRQEERRAEMKSRHDEIRKKYG. Tyr171 carries the phosphotyrosine modification.

As to quaternary structure, interacts with PTTG1.

The protein localises to the cell membrane. The protein resides in the cytoplasm. It is found in the nucleus. Functionally, may facilitate PTTG1 nuclear translocation. The chain is Pituitary tumor-transforming gene 1 protein-interacting protein (Pttg1ip) from Mus musculus (Mouse).